The sequence spans 167 residues: Crossover junction endodeoxyribonuclease RuvC (167 aa).

Residues D7, E67, and D139 contribute to the active site. 3 residues coordinate Mg(2+): D7, E67, and D139.

Belongs to the RuvC family. In terms of assembly, homodimer which binds Holliday junction (HJ) DNA. The HJ becomes 2-fold symmetrical on binding to RuvC with unstacked arms; it has a different conformation from HJ DNA in complex with RuvA. In the full resolvosome a probable DNA-RuvA(4)-RuvB(12)-RuvC(2) complex forms which resolves the HJ. The cofactor is Mg(2+).

Its subcellular location is the cytoplasm. It catalyses the reaction Endonucleolytic cleavage at a junction such as a reciprocal single-stranded crossover between two homologous DNA duplexes (Holliday junction).. Functionally, the RuvA-RuvB-RuvC complex processes Holliday junction (HJ) DNA during genetic recombination and DNA repair. Endonuclease that resolves HJ intermediates. Cleaves cruciform DNA by making single-stranded nicks across the HJ at symmetrical positions within the homologous arms, yielding a 5'-phosphate and a 3'-hydroxyl group; requires a central core of homology in the junction. The consensus cleavage sequence is 5'-(A/T)TT(C/G)-3'. Cleavage occurs on the 3'-side of the TT dinucleotide at the point of strand exchange. HJ branch migration catalyzed by RuvA-RuvB allows RuvC to scan DNA until it finds its consensus sequence, where it cleaves and resolves the cruciform DNA. The protein is Crossover junction endodeoxyribonuclease RuvC of Akkermansia muciniphila (strain ATCC BAA-835 / DSM 22959 / JCM 33894 / BCRC 81048 / CCUG 64013 / CIP 107961 / Muc).